The following is a 237-amino-acid chain: CDP-diacylglycerol--serine O-phosphatidyltransferase (237 aa).

The next 8 helical transmembrane spans lie at 3-23 (INPL…LGMM), 25-45 (IFYA…ASLI), 73-93 (VVAF…YNFG), 95-115 (IGMA…ARFN), 124-144 (YSFI…CVLL), 150-170 (FLEG…GVLM), 184-204 (WNLK…VRPL), and 207-227 (LSVF…FLMV).

Belongs to the CDP-alcohol phosphatidyltransferase class-I family.

It localises to the cell membrane. It catalyses the reaction a CDP-1,2-diacyl-sn-glycerol + L-serine = a 1,2-diacyl-sn-glycero-3-phospho-L-serine + CMP + H(+). In Helicobacter pylori (strain J99 / ATCC 700824) (Campylobacter pylori J99), this protein is CDP-diacylglycerol--serine O-phosphatidyltransferase (pssA).